The chain runs to 199 residues: Ribosome maturation factor RimM (199 aa).

The PRC barrel domain occupies Asp93 to Glu169. The segment at Asp164–Pro199 is disordered.

This sequence belongs to the RimM family. In terms of assembly, binds ribosomal protein uS19.

Its subcellular location is the cytoplasm. In terms of biological role, an accessory protein needed during the final step in the assembly of 30S ribosomal subunit, possibly for assembly of the head region. Essential for efficient processing of 16S rRNA. May be needed both before and after RbfA during the maturation of 16S rRNA. It has affinity for free ribosomal 30S subunits but not for 70S ribosomes. The polypeptide is Ribosome maturation factor RimM (Bradyrhizobium sp. (strain ORS 278)).